Here is a 901-residue protein sequence, read N- to C-terminus: Probable inorganic carbon transporter subunit DabA (901 aa).

Zn(2+) contacts are provided by C424, D426, H606, and C621.

This sequence belongs to the inorganic carbon transporter (TC 9.A.2) DabA family. As to quaternary structure, forms a complex with DabB. Zn(2+) serves as cofactor.

The protein resides in the cell membrane. Part of an energy-coupled inorganic carbon pump. The polypeptide is Probable inorganic carbon transporter subunit DabA (Staphylococcus aureus (strain NCTC 8325 / PS 47)).